We begin with the raw amino-acid sequence, 152 residues long: Protein IpgF (152 aa).

The N-terminal stretch at 1-17 (MSRFVFILLCFIPHLGR) is a signal peptide.

The protein belongs to the IagB/IpgF/P19 family.

The polypeptide is Protein IpgF (ipgF) (Shigella flexneri).